A 213-amino-acid polypeptide reads, in one-letter code: MLTIAVSKGRIYQEALPLLAEAGIVPSVDPDKSRKLILPTERDDVQLVIIRAADVPTYVEYGAADLGIAGKDVLVEYEGEGLYEPLDLGIARCRLMTAGPPGRPVASRRLRVATKYVNTAKRFFARRGVQAEVIKLYGSMELAPLVGLADCIVDLVDTGNTLRANGLAPQELIMDISSRLVVNKAAMKMKYGPITELAGHLARIVSARAARER.

It belongs to the ATP phosphoribosyltransferase family. Short subfamily. Heteromultimer composed of HisG and HisZ subunits.

The protein localises to the cytoplasm. It carries out the reaction 1-(5-phospho-beta-D-ribosyl)-ATP + diphosphate = 5-phospho-alpha-D-ribose 1-diphosphate + ATP. It functions in the pathway amino-acid biosynthesis; L-histidine biosynthesis; L-histidine from 5-phospho-alpha-D-ribose 1-diphosphate: step 1/9. Functionally, catalyzes the condensation of ATP and 5-phosphoribose 1-diphosphate to form N'-(5'-phosphoribosyl)-ATP (PR-ATP). Has a crucial role in the pathway because the rate of histidine biosynthesis seems to be controlled primarily by regulation of HisG enzymatic activity. This is ATP phosphoribosyltransferase from Methylococcus capsulatus (strain ATCC 33009 / NCIMB 11132 / Bath).